A 493-amino-acid polypeptide reads, in one-letter code: Vacuolar-processing enzyme (493 aa).

A signal peptide spans 1 to 34; it reads MAVHRSLLNKPTWCRVAFWWWMLVMVMRIQGTNG. Residues 35-53 constitute a propeptide that is removed on maturation; it reads KEQDSVIKLPTQEVDAESD. The active site involves His-176. Residue Cys-218 is the Nucleophile of the active site. A disulfide bridge links Cys-251 with Cys-265. An N-linked (GlcNAc...) asparagine glycan is attached at Asn-318. 2 cysteine pairs are disulfide-bonded: Cys-429–Cys-459 and Cys-441–Cys-476.

It belongs to the peptidase C13 family.

Its function is as follows. Asparagine-specific endopeptidase involved in the processing of vacuolar seed protein precursors into the mature forms. This is Vacuolar-processing enzyme from Phaseolus vulgaris (Kidney bean).